Here is a 139-residue protein sequence, read N- to C-terminus: Transcription factor E (139 aa).

The region spanning 7–91 (IINKKQDEVS…DYEKILDTLL (85 aa)) is the HTH TFE/IIEalpha-type domain.

The protein belongs to the TFE family. As to quaternary structure, monomer. Interaction with RNA polymerase subunits RpoF and RpoE is necessary for Tfe stimulatory transcription activity. Able to interact with Tbp and RNA polymerase in the absence of DNA promoter. Interacts both with the preinitiation and elongation complexes.

In terms of biological role, transcription factor that plays a role in the activation of archaeal genes transcribed by RNA polymerase. Facilitates transcription initiation by enhancing TATA-box recognition by TATA-box-binding protein (Tbp), and transcription factor B (Tfb) and RNA polymerase recruitment. Not absolutely required for transcription in vitro, but particularly important in cases where Tbp or Tfb function is not optimal. It dynamically alters the nucleic acid-binding properties of RNA polymerases by stabilizing the initiation complex and destabilizing elongation complexes. Seems to translocate with the RNA polymerase following initiation and acts by binding to the non template strand of the transcription bubble in elongation complexes. The protein is Transcription factor E of Nanoarchaeum equitans (strain Kin4-M).